The chain runs to 150 residues: Arginine repressor (150 aa).

It belongs to the ArgR family.

It is found in the cytoplasm. It participates in amino-acid biosynthesis; L-arginine biosynthesis [regulation]. Functionally, regulates arginine biosynthesis genes. This is Arginine repressor from Desulforudis audaxviator (strain MP104C).